The primary structure comprises 253 residues: Ubiquinone/menaquinone biosynthesis C-methyltransferase UbiE (253 aa).

S-adenosyl-L-methionine contacts are provided by residues Thr-76, Asp-97, and Asn-125–Ala-126.

Belongs to the class I-like SAM-binding methyltransferase superfamily. MenG/UbiE family.

It catalyses the reaction a 2-demethylmenaquinol + S-adenosyl-L-methionine = a menaquinol + S-adenosyl-L-homocysteine + H(+). The catalysed reaction is a 2-methoxy-6-(all-trans-polyprenyl)benzene-1,4-diol + S-adenosyl-L-methionine = a 5-methoxy-2-methyl-3-(all-trans-polyprenyl)benzene-1,4-diol + S-adenosyl-L-homocysteine + H(+). Its pathway is quinol/quinone metabolism; menaquinone biosynthesis; menaquinol from 1,4-dihydroxy-2-naphthoate: step 2/2. It functions in the pathway cofactor biosynthesis; ubiquinone biosynthesis. Functionally, methyltransferase required for the conversion of demethylmenaquinol (DMKH2) to menaquinol (MKH2) and the conversion of 2-polyprenyl-6-methoxy-1,4-benzoquinol (DDMQH2) to 2-polyprenyl-3-methyl-6-methoxy-1,4-benzoquinol (DMQH2). This Rhodopseudomonas palustris (strain BisB5) protein is Ubiquinone/menaquinone biosynthesis C-methyltransferase UbiE.